The sequence spans 327 residues: MSQVSTLIDVDKPLFDLSTFAGRFQYFAWMTDPRTVVVSSDRLLEAKAMVERYRKGDQSPPLKPEEVHYNMKLYNSAFHPDTGELQNFCGRMSFQVPGGMLITGGMLAFYRTVPAVVLWQFINQSFNAVVNYTNRNANSPTSVTQLGVAYVSATTSALVAAIGCKNYWSKKATPLFQRFVPFAAVAAANFVNIPLMRQNEIINGIEVKNDDGVVVGQSRLAAIKGIGEVVVSRIAMAAPGMLVLPLIMERLEKLPAYRRIKWINAPFQTLLVGCFLCFMVPTACALFPQQCSLDTSIMRTFEPELYEDLEKKTQGKVPKRVYFNKGL.

A run of 5 helical transmembrane segments spans residues 99–119 (GMLI…VVLW), 143–163 (VTQL…AAIG), 175–195 (LFQR…NIPL), 228–248 (EVVV…PLIM), and 267–287 (FQTL…CALF).

It belongs to the sideroflexin family.

The protein resides in the mitochondrion membrane. The enzyme catalyses L-serine(in) = L-serine(out). Its function is as follows. Mitochondrial amino-acid transporter that mediates transport of serine into mitochondria. The protein is Sideroflexin-2 of Drosophila melanogaster (Fruit fly).